The following is a 540-amino-acid chain: Sterol 14-alpha demethylase (540 aa).

A helical membrane pass occupies residues 41–61 (PLFLVSGFLGVCVAYAVANII). Cys485 serves as a coordination point for heme.

Belongs to the cytochrome P450 family. Heme is required as a cofactor.

The protein localises to the membrane. It catalyses the reaction a 14alpha-methyl steroid + 3 reduced [NADPH--hemoprotein reductase] + 3 O2 = a Delta(14) steroid + formate + 3 oxidized [NADPH--hemoprotein reductase] + 4 H2O + 4 H(+). The enzyme catalyses a 14alpha-methyl steroid + reduced [NADPH--hemoprotein reductase] + O2 = a 14alpha-hydroxymethyl steroid + oxidized [NADPH--hemoprotein reductase] + H2O + H(+). It carries out the reaction a 14alpha-hydroxymethyl steroid + reduced [NADPH--hemoprotein reductase] + O2 = a 14alpha-formyl steroid + oxidized [NADPH--hemoprotein reductase] + 2 H2O + H(+). The catalysed reaction is a 14alpha-formyl steroid + reduced [NADPH--hemoprotein reductase] + O2 = a Delta(14) steroid + formate + oxidized [NADPH--hemoprotein reductase] + H2O + 2 H(+). It catalyses the reaction lanosterol + 3 reduced [NADPH--hemoprotein reductase] + 3 O2 = 4,4-dimethyl-5alpha-cholesta-8,14,24-trien-3beta-ol + formate + 3 oxidized [NADPH--hemoprotein reductase] + 4 H2O + 4 H(+). The enzyme catalyses lanosterol + reduced [NADPH--hemoprotein reductase] + O2 = 32-hydroxylanosterol + oxidized [NADPH--hemoprotein reductase] + H2O + H(+). It carries out the reaction 32-hydroxylanosterol + reduced [NADPH--hemoprotein reductase] + O2 = 32-oxolanosterol + oxidized [NADPH--hemoprotein reductase] + 2 H2O + H(+). The catalysed reaction is 32-oxolanosterol + reduced [NADPH--hemoprotein reductase] + O2 = 4,4-dimethyl-5alpha-cholesta-8,14,24-trien-3beta-ol + formate + oxidized [NADPH--hemoprotein reductase] + H2O + 2 H(+). It catalyses the reaction eburicol + 3 reduced [NADPH--hemoprotein reductase] + 3 O2 = 14-demethyleburicol + formate + 3 oxidized [NADPH--hemoprotein reductase] + 4 H2O + 4 H(+). The enzyme catalyses eburicol + reduced [NADPH--hemoprotein reductase] + O2 = 32-hydroxyeburicol + oxidized [NADPH--hemoprotein reductase] + H2O + H(+). It carries out the reaction 32-hydroxyeburicol + reduced [NADPH--hemoprotein reductase] + O2 = 32-oxoeburicol + oxidized [NADPH--hemoprotein reductase] + 2 H2O + H(+). The catalysed reaction is 32-oxoeburicol + reduced [NADPH--hemoprotein reductase] + O2 = 14-demethyleburicol + formate + oxidized [NADPH--hemoprotein reductase] + H2O + 2 H(+). It functions in the pathway steroid biosynthesis; sterol biosynthesis. Functionally, sterol 14-alpha demethylase; part of the gene cluster that mediates the biosynthesis of tetrahydropyranyl antifungal agent lanomycin that acts as an inhibitor of CYP51 and blocks the ergosterol biosynthesis. Sterol 14-alpha-demethylase plays a critical role in the biosynthesis of ergosterol, the major sterol component in fungal membranes that participates in a variety of functions. Acts as a self-resistant CYP51 that contains mutations found in CYP51s isolated from azole resistance strains and that is not inhibited by the final product of the cluster, lanomycin. This Pyrenophora dematioidea (Helminthosporium dematioideum) protein is Sterol 14-alpha demethylase.